We begin with the raw amino-acid sequence, 296 residues long: Cytidine deaminase (296 aa).

2 CMP/dCMP-type deaminase domains span residues 47 to 167 (SQDE…FGPA) and 186 to 296 (ESAD…VDPV). 88 to 90 (NLE) contributes to the substrate binding site. Position 101 (His101) interacts with Zn(2+). Glu103 (proton donor) is an active-site residue. The Zn(2+) site is built by Cys128 and Cys131.

This sequence belongs to the cytidine and deoxycytidylate deaminase family. Homodimer. Zn(2+) serves as cofactor.

The enzyme catalyses cytidine + H2O + H(+) = uridine + NH4(+). It carries out the reaction 2'-deoxycytidine + H2O + H(+) = 2'-deoxyuridine + NH4(+). In terms of biological role, this enzyme scavenges exogenous and endogenous cytidine and 2'-deoxycytidine for UMP synthesis. The protein is Cytidine deaminase of Shewanella loihica (strain ATCC BAA-1088 / PV-4).